The chain runs to 252 residues: Proteasome subunit alpha type-7-1B (252 aa).

It belongs to the peptidase T1A family. The 26S proteasome consists of a 20S proteasome core and two 19S regulatory subunits. The 20S proteasome core is composed of 28 subunits that are arranged in four stacked rings, resulting in a barrel-shaped structure. The two end rings are each formed by seven alpha subunits, and the two central rings are each formed by seven beta subunits. The catalytic chamber with the active sites is on the inside of the barrel. Testis specific.

The protein localises to the cytoplasm. Its subcellular location is the nucleus. Functionally, the proteasome is a multicatalytic proteinase complex which is characterized by its ability to cleave peptides with Arg, Phe, Tyr, Leu, and Glu adjacent to the leaving group at neutral or slightly basic pH. The proteasome has an ATP-dependent proteolytic activity. This chain is Proteasome subunit alpha type-7-1B (Prosalpha4T2), found in Drosophila melanogaster (Fruit fly).